The chain runs to 412 residues: Short-chain specific acyl-CoA dehydrogenase, mitochondrial (412 aa).

The N-terminal 24 residues, 1-24, are a transit peptide targeting the mitochondrion; that stretch reads MAAALLARASGPARRALCPRAWRQ. Phosphothreonine is present on threonine 27. Lysine 51 is modified (N6-acetyllysine; alternate). Lysine 51 is subject to N6-succinyllysine; alternate. At lysine 72 the chain carries N6-acetyllysine. Lysine 129 carries the post-translational modification N6-acetyllysine; alternate. At lysine 129 the chain carries N6-succinyllysine; alternate. Residues 152 to 161 and 185 to 187 contribute to the FAD site; these read FALSEPGNGS and WIT. Serine 161 lines the substrate pocket. N6-acetyllysine is present on lysine 208. An N6-acetyllysine; alternate modification is found at lysine 262. Lysine 262 is modified (N6-succinyllysine; alternate). 269 to 272 is a binding site for substrate; sequence DMGR. Residue arginine 297 participates in FAD binding. The residue at position 306 (lysine 306) is an N6-acetyllysine; alternate. Position 306 is an N6-succinyllysine; alternate (lysine 306). FAD is bound by residues glutamine 308 and 365–369; that span reads QILGG. The active-site Proton acceptor is glutamate 392. Residue glycine 393 participates in substrate binding. 394–396 is an FAD binding site; sequence TSE.

The protein belongs to the acyl-CoA dehydrogenase family. As to quaternary structure, homotetramer. The cofactor is FAD.

It localises to the mitochondrion matrix. The catalysed reaction is a short-chain 2,3-saturated fatty acyl-CoA + oxidized [electron-transfer flavoprotein] + H(+) = a short-chain (2E)-enoyl-CoA + reduced [electron-transfer flavoprotein]. It carries out the reaction butanoyl-CoA + oxidized [electron-transfer flavoprotein] + H(+) = (2E)-butenoyl-CoA + reduced [electron-transfer flavoprotein]. The enzyme catalyses pentanoyl-CoA + oxidized [electron-transfer flavoprotein] + H(+) = (2E)-pentenoyl-CoA + reduced [electron-transfer flavoprotein]. It catalyses the reaction hexanoyl-CoA + oxidized [electron-transfer flavoprotein] + H(+) = (2E)-hexenoyl-CoA + reduced [electron-transfer flavoprotein]. It participates in lipid metabolism; mitochondrial fatty acid beta-oxidation. Functionally, short-chain specific acyl-CoA dehydrogenase is one of the acyl-CoA dehydrogenases that catalyze the first step of mitochondrial fatty acid beta-oxidation, an aerobic process breaking down fatty acids into acetyl-CoA and allowing the production of energy from fats. The first step of fatty acid beta-oxidation consists in the removal of one hydrogen from C-2 and C-3 of the straight-chain fatty acyl-CoA thioester, resulting in the formation of trans-2-enoyl-CoA. Among the different mitochondrial acyl-CoA dehydrogenases, short-chain specific acyl-CoA dehydrogenase acts specifically on acyl-CoAs with saturated 4 to 6 carbons long primary chains. This is Short-chain specific acyl-CoA dehydrogenase, mitochondrial (ACADS) from Homo sapiens (Human).